Here is a 635-residue protein sequence, read N- to C-terminus: 3-dehydroshikimate dehydratase (635 aa).

A divalent metal cation-binding residues include Glu-134, Asp-165, Gln-191, and Glu-239. VOC domains lie at Gly-295–Gln-414 and Arg-440–Glu-590. Mg(2+) is bound by residues His-443, His-521, and Glu-599.

It belongs to the bacterial two-domain DSD family. In terms of assembly, homodimer. The cofactor is Co(2+). It depends on Ni(2+) as a cofactor. Mg(2+) serves as cofactor. Mn(2+) is required as a cofactor.

The enzyme catalyses 3-dehydroshikimate = 3,4-dihydroxybenzoate + H2O. It participates in aromatic compound metabolism; 3,4-dihydroxybenzoate biosynthesis. Functionally, catalyzes the conversion of 3-dehydroshikimate to protocatechuate (3,4-dihydroxybenzoate), a common intermediate of quinate and shikimate degradation pathways. This is 3-dehydroshikimate dehydratase from Pseudomonas putida (strain ATCC 47054 / DSM 6125 / CFBP 8728 / NCIMB 11950 / KT2440).